The chain runs to 596 residues: Pentatricopeptide repeat-containing protein At5g38730 (596 aa).

PPR repeat units follow at residues 132–166, 167–201, 202–236, 237–271, 272–302, 306–340, 341–375, 376–410, 411–445, 446–480, 481–515, and 516–550; these read VSHVFSWLMIYYAKAGMINDSIVVFEQIRSCGLKP, HLQACTVLLNSLVKQRLTDTVWKIFKKMVKLGVVA, NIHVYNVLVHACSKSGDPEKAEKLLSEMEEKGVFP, DIFTYNTLISVYCKKSMHFEALSVQDRMERSGVAP, NIVTYNSFIHGFSREGRMREATRLFREIKDD, NHVTYTTLIDGYCRMNDIDEALRLREVMESRGFSP, GVVTYNSILRKLCEDGRIREANRLLTEMSGKKIEP, DNITCNTLINAYCKIEDMVSAVKVKKKMIESGLKL, DMYSYKALIHGFCKVLELENAKEELFSMIEKGFSP, GYATYSWLVDGFYNQNKQDEITKLLEEFEKRGLCA, DVALYRGLIRRICKLEQVDYAKVLFESMEKKGLVG, and DSVIFTTMAYAYWRTGKVTEASALFDVMYNRRLMV.

Belongs to the PPR family. P subfamily.

This is Pentatricopeptide repeat-containing protein At5g38730 from Arabidopsis thaliana (Mouse-ear cress).